A 513-amino-acid chain; its full sequence is Beta-glucosidase 5 (513 aa).

The first 26 residues, 1-26 (MAAAIAVVYLSLLLLLLHGAAPAVLG), serve as a signal peptide directing secretion. Residue Gln46 coordinates a beta-D-glucoside. Glu192 acts as the Proton donor in catalysis. An intrachain disulfide couples Cys211 to Cys220. N-linked (GlcNAc...) asparagine glycans are attached at residues Asn224 and Asn273. Positions 336 and 405 each coordinate a beta-D-glucoside. The Nucleophile role is filled by Glu405. Asn412 carries an N-linked (GlcNAc...) asparagine glycan. Residues Trp447, 454–455 (EY), and Tyr463 each bind a beta-D-glucoside.

This sequence belongs to the glycosyl hydrolase 1 family.

The enzyme catalyses Hydrolysis of terminal, non-reducing beta-D-glucosyl residues with release of beta-D-glucose.. This is Beta-glucosidase 5 (BGLU5) from Oryza sativa subsp. japonica (Rice).